The following is a 344-amino-acid chain: RNA 3'-terminal phosphate cyclase (344 aa).

ATP contacts are provided by residues Gln103 and His283 to Gln287. His308 (tele-AMP-histidine intermediate) is an active-site residue.

This sequence belongs to the RNA 3'-terminal cyclase family. Type 1 subfamily.

It is found in the cytoplasm. The enzyme catalyses a 3'-end 3'-phospho-ribonucleotide-RNA + ATP = a 3'-end 2',3'-cyclophospho-ribonucleotide-RNA + AMP + diphosphate. In terms of biological role, catalyzes the conversion of 3'-phosphate to a 2',3'-cyclic phosphodiester at the end of RNA. The mechanism of action of the enzyme occurs in 3 steps: (A) adenylation of the enzyme by ATP; (B) transfer of adenylate to an RNA-N3'P to produce RNA-N3'PP5'A; (C) and attack of the adjacent 2'-hydroxyl on the 3'-phosphorus in the diester linkage to produce the cyclic end product. The biological role of this enzyme is unknown but it is likely to function in some aspects of cellular RNA processing. This chain is RNA 3'-terminal phosphate cyclase, found in Salmonella paratyphi C (strain RKS4594).